The chain runs to 454 residues: Toxin CfTX-A (454 aa).

The signal sequence occupies residues 1 to 18; the sequence is MDYAFIVFLVCFVSGTLG. A propeptide spanning residues 19–25 is cleaved from the precursor; that stretch reads NRRRAKR. The stretch at 27–61 forms a coiled coil; that stretch reads VDEVTSGINQLVNQLNNVQQDTAAIKSALEELKTE.

This sequence belongs to the jellyfish toxin family. Type II subfamily. In terms of assembly, oligomer. In terms of processing, contains 2 disulfide bonds. Nematocytes.

It is found in the secreted. The protein localises to the nematocyst. Its subcellular location is the target cell membrane. The fraction containing this toxin and CfTX-A shows potent hemolytic activity. This fraction causes minor effects on the cardiovascular system of anesthetized rats (at 25 ug/kg), since it has no significant effects on heart rate but produces relatively small increases in mean arterial pressure. This Chironex fleckeri (Australian box jellyfish) protein is Toxin CfTX-A.